The following is a 328-amino-acid chain: Phenylalanine--tRNA ligase alpha subunit (328 aa).

Mg(2+) is bound at residue Glu253.

Belongs to the class-II aminoacyl-tRNA synthetase family. Phe-tRNA synthetase alpha subunit type 1 subfamily. In terms of assembly, tetramer of two alpha and two beta subunits. Mg(2+) serves as cofactor.

It localises to the cytoplasm. The catalysed reaction is tRNA(Phe) + L-phenylalanine + ATP = L-phenylalanyl-tRNA(Phe) + AMP + diphosphate + H(+). This chain is Phenylalanine--tRNA ligase alpha subunit, found in Actinobacillus pleuropneumoniae serotype 5b (strain L20).